We begin with the raw amino-acid sequence, 212 residues long: Adenylate kinase (212 aa).

10-15 (GAGKGT) provides a ligand contact to ATP. Residues 30–59 (ALGDIFRTIIKTSTSEAELINNYVKQGELV) are NMP. AMP is bound by residues Arg-36, 57 to 59 (ELV), 85 to 88 (GYPR), and Gln-92. Residues 122-160 (GRYSCKNCRKIYNSYFLQPKTDNVCDVCGSSTFDYRKDD) are LID. Arg-123 is a binding site for ATP. Positions 126 and 129 each coordinate Zn(2+). ATP is bound at residue 132 to 133 (IY). Zn(2+)-binding residues include Cys-146 and Cys-149. Residues Arg-157 and Arg-168 each contribute to the AMP site. Lys-196 serves as a coordination point for ATP.

The protein belongs to the adenylate kinase family. As to quaternary structure, monomer.

Its subcellular location is the cytoplasm. It carries out the reaction AMP + ATP = 2 ADP. It functions in the pathway purine metabolism; AMP biosynthesis via salvage pathway; AMP from ADP: step 1/1. In terms of biological role, catalyzes the reversible transfer of the terminal phosphate group between ATP and AMP. Plays an important role in cellular energy homeostasis and in adenine nucleotide metabolism. The protein is Adenylate kinase of Rickettsia akari (strain Hartford).